Consider the following 143-residue polypeptide: Mediator of RNA polymerase II transcription subunit 10 (143 aa).

The tract at residues 123–143 (GAHSNTEISTNPGQKRQGNVS) is disordered. The span at 124–143 (AHSNTEISTNPGQKRQGNVS) shows a compositional bias: polar residues.

This sequence belongs to the Mediator complex subunit 10 family. As to quaternary structure, component of the Mediator complex.

It is found in the nucleus. Component of the Mediator complex, a coactivator involved in the regulated transcription of nearly all RNA polymerase II-dependent genes. Mediator functions as a bridge to convey information from gene-specific regulatory proteins to the basal RNA polymerase II transcription machinery. Mediator is recruited to promoters by direct interactions with regulatory proteins and serves as a scaffold for the assembly of a functional preinitiation complex with RNA polymerase II and the general transcription factors. The protein is Mediator of RNA polymerase II transcription subunit 10 (NUT2) of Yarrowia lipolytica (strain CLIB 122 / E 150) (Yeast).